Here is a 164-residue protein sequence, read N- to C-terminus: FMN reductase (NADH) RutF (164 aa).

The protein belongs to the non-flavoprotein flavin reductase family. RutF subfamily.

The catalysed reaction is FMNH2 + NAD(+) = FMN + NADH + 2 H(+). In terms of biological role, catalyzes the reduction of FMN to FMNH2 which is used to reduce pyrimidine by RutA via the Rut pathway. This is FMN reductase (NADH) RutF from Klebsiella variicola (strain At-22).